Consider the following 354-residue polypeptide: Probable mannitol dehydrogenase 1 (354 aa).

Zn(2+) contacts are provided by C43, H65, C96, C99, C102, C110, and C158.

The protein belongs to the zinc-containing alcohol dehydrogenase family. Requires Zn(2+) as cofactor.

The catalysed reaction is D-mannitol + NAD(+) = D-mannose + NADH + H(+). In terms of biological role, oxidizes mannitol to mannose. Provides the initial step by which translocated mannitol is committed to central metabolism and, by regulating mannitol pool size, is important in regulating salt tolerance at the cellular level. This Stylosanthes humilis (Townsville stylo) protein is Probable mannitol dehydrogenase 1 (CAD1).